The primary structure comprises 55 residues: Protein SOX-19 (55 aa).

The segment at residues 1-55 (MVWSQIERRKIMEQWPDMHNAEISKRLGKRWKLLPDYEKIPFIKEAERLRLKHMA) is a DNA-binding region (HMG box).

Its subcellular location is the nucleus. The protein is Protein SOX-19 (Sox19) of Mus musculus (Mouse).